The sequence spans 288 residues: Acetyl-coenzyme A carboxylase carboxyl transferase subunit beta (288 aa).

Residues 34–288 (LFAKCPACKH…HLVAFHGGVS (255 aa)) enclose the CoA carboxyltransferase N-terminal domain. The Zn(2+) site is built by cysteine 38, cysteine 41, cysteine 56, and cysteine 59. The C4-type zinc-finger motif lies at 38 to 59 (CPACKHMIYQKDLGPAKICPTC).

The protein belongs to the AccD/PCCB family. Acetyl-CoA carboxylase is a heterohexamer composed of biotin carboxyl carrier protein (AccB), biotin carboxylase (AccC) and two subunits each of ACCase subunit alpha (AccA) and ACCase subunit beta (AccD). It depends on Zn(2+) as a cofactor.

It is found in the cytoplasm. It carries out the reaction N(6)-carboxybiotinyl-L-lysyl-[protein] + acetyl-CoA = N(6)-biotinyl-L-lysyl-[protein] + malonyl-CoA. Its pathway is lipid metabolism; malonyl-CoA biosynthesis; malonyl-CoA from acetyl-CoA: step 1/1. In terms of biological role, component of the acetyl coenzyme A carboxylase (ACC) complex. Biotin carboxylase (BC) catalyzes the carboxylation of biotin on its carrier protein (BCCP) and then the CO(2) group is transferred by the transcarboxylase to acetyl-CoA to form malonyl-CoA. The protein is Acetyl-coenzyme A carboxylase carboxyl transferase subunit beta of Streptococcus equi subsp. equi (strain 4047).